A 386-amino-acid polypeptide reads, in one-letter code: Succinate--CoA ligase [ADP-forming] subunit beta (386 aa).

The ATP-grasp domain occupies 9-244; the sequence is KAVLRSYGVS…LDEEDSKEIE (236 aa). Residues Lys-46, 53–55, Glu-99, Cys-102, and Glu-107 each bind ATP; that span reads GRG. 2 residues coordinate Mg(2+): Asn-199 and Asp-213. Substrate is bound by residues Asn-264 and 321–323; that span reads GIM.

Belongs to the succinate/malate CoA ligase beta subunit family. Heterotetramer of two alpha and two beta subunits. Mg(2+) serves as cofactor.

It catalyses the reaction succinate + ATP + CoA = succinyl-CoA + ADP + phosphate. It carries out the reaction GTP + succinate + CoA = succinyl-CoA + GDP + phosphate. Its pathway is carbohydrate metabolism; tricarboxylic acid cycle; succinate from succinyl-CoA (ligase route): step 1/1. Its function is as follows. Succinyl-CoA synthetase functions in the citric acid cycle (TCA), coupling the hydrolysis of succinyl-CoA to the synthesis of either ATP or GTP and thus represents the only step of substrate-level phosphorylation in the TCA. The beta subunit provides nucleotide specificity of the enzyme and binds the substrate succinate, while the binding sites for coenzyme A and phosphate are found in the alpha subunit. This Bacillus cereus (strain ATCC 14579 / DSM 31 / CCUG 7414 / JCM 2152 / NBRC 15305 / NCIMB 9373 / NCTC 2599 / NRRL B-3711) protein is Succinate--CoA ligase [ADP-forming] subunit beta.